The sequence spans 159 residues: Transcription elongation factor GreA (159 aa).

This sequence belongs to the GreA/GreB family.

In terms of biological role, necessary for efficient RNA polymerase transcription elongation past template-encoded arresting sites. The arresting sites in DNA have the property of trapping a certain fraction of elongating RNA polymerases that pass through, resulting in locked ternary complexes. Cleavage of the nascent transcript by cleavage factors such as GreA or GreB allows the resumption of elongation from the new 3'terminus. GreA releases sequences of 2 to 3 nucleotides. The chain is Transcription elongation factor GreA from Buchnera aphidicola subsp. Cinara cedri (strain Cc).